A 185-amino-acid chain; its full sequence is Capsid protein (185 aa).

Residues 136 to 185 form a disordered region; sequence NAPILSTLPETTVVRRRDRGRSPRRRTPSPRRRRSQSPRRRRSQSRESQC. A compositionally biased stretch (basic residues) spans 149–178; sequence VRRRDRGRSPRRRTPSPRRRRSQSPRRRRS. Phosphoserine; by host is present on residues S157, S164, and S172. One copy of the 1; half-length repeat lies at 157–163; sequence SPRRRTP. A 3 X 8 AA repeats of S-P-R-R-R-[PR]-S-Q region spans residues 157–179; it reads SPRRRTPSPRRRRSQSPRRRRSQ. Positions 160-177 match the Bipartite nuclear localization signal motif; the sequence is RRTPSPRRRRSQSPRRRR. 2 tandem repeats follow at residues 164–171 and 172–179. The RNA binding stretch occupies residues 179-185; it reads QSRESQC.

The protein belongs to the orthohepadnavirus core antigen family. Homodimerizes, then multimerizes. Interacts with cytosol exposed regions of viral L glycoprotein present in the reticulum-to-Golgi compartment. Interacts with human FLNB. Phosphorylated form interacts with host importin alpha; this interaction depends on the exposure of the NLS, which itself depends upon genome maturation and/or phosphorylation of the capsid protein. Interacts with host NUP153. Post-translationally, phosphorylated by host SRPK1, SRPK2, and maybe protein kinase C or GAPDH. Phosphorylation is critical for pregenomic RNA packaging. Protein kinase C phosphorylation is stimulated by HBx protein and may play a role in transport of the viral genome to the nucleus at the late step during the viral replication cycle.

Its subcellular location is the virion. The protein localises to the host cytoplasm. Functionally, self assembles to form an icosahedral capsid. Most capsids appear to be large particles with an icosahedral symmetry of T=4 and consist of 240 copies of capsid protein, though a fraction forms smaller T=3 particles consisting of 180 capsid proteins. Entering capsids are transported along microtubules to the nucleus. Phosphorylation of the capsid is thought to induce exposure of nuclear localization signal in the C-terminal portion of the capsid protein that allows binding to the nuclear pore complex via the importin (karyopherin-) alpha and beta. Capsids are imported in intact form through the nuclear pore into the nuclear basket, where it probably binds NUP153. Only capsids that contain the mature viral genome can release the viral DNA and capsid protein into the nucleoplasm. Immature capsids get stuck in the basket. Capsids encapsulate the pre-genomic RNA and the P protein. Pre-genomic RNA is reverse-transcribed into DNA while the capsid is still in the cytoplasm. The capsid can then either be directed to the nucleus, providing more genomes for transcription, or bud through the endoplasmic reticulum to provide new virions. In Homo sapiens (Human), this protein is Capsid protein.